Here is a 417-residue protein sequence, read N- to C-terminus: Acetate kinase (417 aa).

Residue Asn-9 participates in Mg(2+) binding. ATP is bound at residue Lys-16. Arg-90 lines the substrate pocket. Asp-147 acts as the Proton donor/acceptor in catalysis. ATP is bound by residues 207-211 (HIGNG), 282-284 (DLR), and 330-334 (GIGEN). Glu-384 is a Mg(2+) binding site.

This sequence belongs to the acetokinase family. Homodimer. It depends on Mg(2+) as a cofactor. The cofactor is Mn(2+).

The protein resides in the cytoplasm. The enzyme catalyses acetate + ATP = acetyl phosphate + ADP. It participates in metabolic intermediate biosynthesis; acetyl-CoA biosynthesis; acetyl-CoA from acetate: step 1/2. In terms of biological role, catalyzes the formation of acetyl phosphate from acetate and ATP. Can also catalyze the reverse reaction. The polypeptide is Acetate kinase (Staphylococcus epidermidis (strain ATCC 35984 / DSM 28319 / BCRC 17069 / CCUG 31568 / BM 3577 / RP62A)).